The sequence spans 432 residues: Mitochondrial distribution and morphology protein 12 (432 aa).

One can recognise an SMP-LTD domain in the interval 1–432 (MSIEVDWRAA…VFPSFWTFLI (432 aa)). Disordered regions lie at residues 182-273 (WTDP…PRMR) and 354-377 (QQEA…PKRQ). Low complexity predominate over residues 214 to 234 (TSNPTSRPSTSSTLPSHPSAS). Composition is skewed to basic and acidic residues over residues 243 to 253 (TGKEHGSLAED) and 355 to 364 (QEARGQDDRP).

It belongs to the MDM12 family. As to quaternary structure, component of the ER-mitochondria encounter structure (ERMES) or MDM complex, composed of mmm1, mdm10, mdm12 and mdm34. A mmm1 homodimer associates with one molecule of mdm12 on each side in a pairwise head-to-tail manner, and the SMP-LTD domains of mmm1 and mdm12 generate a continuous hydrophobic tunnel for phospholipid trafficking.

The protein localises to the mitochondrion outer membrane. The protein resides in the endoplasmic reticulum membrane. In terms of biological role, component of the ERMES/MDM complex, which serves as a molecular tether to connect the endoplasmic reticulum (ER) and mitochondria. Components of this complex are involved in the control of mitochondrial shape and protein biogenesis, and function in nonvesicular lipid trafficking between the ER and mitochondria. Mdm12 is required for the interaction of the ER-resident membrane protein mmm1 and the outer mitochondrial membrane-resident beta-barrel protein mdm10. The mdm12-mmm1 subcomplex functions in the major beta-barrel assembly pathway that is responsible for biogenesis of all mitochondrial outer membrane beta-barrel proteins, and acts in a late step after the SAM complex. The mdm10-mdm12-mmm1 subcomplex further acts in the TOM40-specific pathway after the action of the mdm12-mmm1 complex. Essential for establishing and maintaining the structure of mitochondria and maintenance of mtDNA nucleoids. The polypeptide is Mitochondrial distribution and morphology protein 12 (Aspergillus oryzae (strain ATCC 42149 / RIB 40) (Yellow koji mold)).